Reading from the N-terminus, the 477-residue chain is UDP-N-acetylmuramate--L-alanine ligase (477 aa).

ATP is bound at residue 122–128; it reads GTHGKTT.

Belongs to the MurCDEF family.

The protein localises to the cytoplasm. The catalysed reaction is UDP-N-acetyl-alpha-D-muramate + L-alanine + ATP = UDP-N-acetyl-alpha-D-muramoyl-L-alanine + ADP + phosphate + H(+). It functions in the pathway cell wall biogenesis; peptidoglycan biosynthesis. Functionally, cell wall formation. This chain is UDP-N-acetylmuramate--L-alanine ligase, found in Xylella fastidiosa (strain 9a5c).